The sequence spans 744 residues: Adenosylcobalamin-dependent ribonucleoside-triphosphate reductase (744 aa).

C120 and C424 are disulfide-bonded. Residues 148-159 (SMPFSFLFDQLM) form an effector region-1 region. An effector region-2 region spans residues 169-318 (VNSNIKQIPK…ICNLIGKTVV (150 aa)). Catalysis depends on residues C413 and E415. The tract at residues 570-631 (FHYAGYLIQR…SKNFASAGTV (62 aa)) is adenosylcobalamin-binding-1. The segment at 690–729 (LKQAPKEPINKKTYEERAALITDDVEEVFTKQNDDQKGLE) is adenosylcobalamin-binding-2.

Belongs to the class II ribonucleoside-triphosphate reductase family. Monomer. Requires adenosylcob(III)alamin as cofactor.

It catalyses the reaction a 2'-deoxyribonucleoside 5'-triphosphate + [thioredoxin]-disulfide + H2O = a ribonucleoside 5'-triphosphate + [thioredoxin]-dithiol. Its activity is regulated as follows. Allosterically regulated by ATP and dNTP. The polypeptide is Adenosylcobalamin-dependent ribonucleoside-triphosphate reductase (rtpR) (Lactobacillus acidophilus (strain ATCC 700396 / NCK56 / N2 / NCFM)).